A 119-amino-acid polypeptide reads, in one-letter code: uncharacterized protein (119 aa).

Residue C13 is part of the active site.

This sequence belongs to the ArsC family.

This is an uncharacterized protein from Escherichia coli (strain K12).